A 157-amino-acid polypeptide reads, in one-letter code: RNA pyrophosphohydrolase (157 aa).

The Nudix hydrolase domain occupies 6 to 149; the sequence is SYRPNVAAVI…KRKVYRRVID (144 aa). A Nudix box motif is present at residues 43 to 64; that stretch reads GGIDEGETPEDALYRELLEEIG.

It belongs to the Nudix hydrolase family. RppH subfamily. A divalent metal cation is required as a cofactor.

Accelerates the degradation of transcripts by removing pyrophosphate from the 5'-end of triphosphorylated RNA, leading to a more labile monophosphorylated state that can stimulate subsequent ribonuclease cleavage. This chain is RNA pyrophosphohydrolase, found in Sulfurovum sp. (strain NBC37-1).